The primary structure comprises 783 residues: Outer membrane usher protein FanD (783 aa).

The signal sequence occupies residues 1–23; it reads MNRKKHQILKILLLCLISSKSSA. A disulfide bridge links cysteine 763 with cysteine 782.

Belongs to the fimbrial export usher family.

The protein resides in the cell outer membrane. Its function is as follows. Involved in the export and assembly of K99 fimbrial subunits across the outer membrane. In Escherichia coli, this protein is Outer membrane usher protein FanD (fanD).